The following is a 105-amino-acid chain: Large ribosomal subunit protein bL21 (105 aa).

It belongs to the bacterial ribosomal protein bL21 family. Part of the 50S ribosomal subunit. Contacts protein L20.

This protein binds to 23S rRNA in the presence of protein L20. This Methylobacterium nodulans (strain LMG 21967 / CNCM I-2342 / ORS 2060) protein is Large ribosomal subunit protein bL21.